Here is a 447-residue protein sequence, read N- to C-terminus: N-succinylarginine dihydrolase (447 aa).

Substrate is bound by residues 19–28 (AGLSFGNEAS), N110, and 137–138 (HR). E174 is a catalytic residue. R212 serves as a coordination point for substrate. Residue H248 is part of the active site. Residues D250 and N359 each contribute to the substrate site. Residue C365 is the Nucleophile of the active site.

The protein belongs to the succinylarginine dihydrolase family. Homodimer.

The catalysed reaction is N(2)-succinyl-L-arginine + 2 H2O + 2 H(+) = N(2)-succinyl-L-ornithine + 2 NH4(+) + CO2. Its pathway is amino-acid degradation; L-arginine degradation via AST pathway; L-glutamate and succinate from L-arginine: step 2/5. Functionally, catalyzes the hydrolysis of N(2)-succinylarginine into N(2)-succinylornithine, ammonia and CO(2). This Escherichia coli O6:H1 (strain CFT073 / ATCC 700928 / UPEC) protein is N-succinylarginine dihydrolase.